The sequence spans 324 residues: Signal peptidase I (324 aa).

A Blocked amino end (Met) modification is found at methionine 1. The Periplasmic segment spans residues 1–3 (MAN). A helical transmembrane segment spans residues 4–22 (MFALILVIATLVTGILWCV). At 23–58 (DKFFFAPKRRERQAAAQAAAGDSLDKATLKKVAPKP) the chain is on the cytoplasmic side. The helical transmembrane segment at 59–77 (GWLETGASVFPVLAIVLIV) threads the bilayer. Topologically, residues 78-324 (RSFIYEPFQI…LRLSRIGGIH (247 aa)) are periplasmic. Catalysis depends on residues serine 91 and lysine 146. Residues cysteine 171 and cysteine 177 are joined by a disulfide bond.

It belongs to the peptidase S26 family.

The protein localises to the cell inner membrane. It carries out the reaction Cleavage of hydrophobic, N-terminal signal or leader sequences from secreted and periplasmic proteins.. This is Signal peptidase I (lepB) from Escherichia coli (strain K12).